The sequence spans 342 residues: MTQKITLHDMTLRDGMHPKRHLMTLEQMKSVAQGLDAAGVPLIEVTHGDGLGGASVNYGFPAHSDEEYLGTVIPLMKQAKVSALLLPGIGTVDHLKMAHGLGVHTIRVATHCTEADVSEQHITMARKLDMDTVGFLMMAHMNDAAGLVKQARLMEGYGANCIYVTDSAGYLLPDQVTERIAAVRAALKPETELGFHCHHNLAMGVANSIAAIQAGANRIDAAAAGLGAGAGNTPLEVLVAVLDRMGIDTGVDVWKIQDVAEDLVVPLMDFPIRIDRDALTLGYAGVYGSFLLFAKRAEKKYGIPARDLLVELGRRGMVGGQEDMIEDTALTMARARGLTVNA.

Residues 5–257 (ITLHDMTLRD…DTGVDVWKIQ (253 aa)) form the Pyruvate carboxyltransferase domain. A substrate-binding site is contributed by 13–14 (RD). Aspartate 14 is a binding site for Mn(2+). The Proton acceptor role is filled by histidine 17. Substrate is bound by residues serine 167 and histidine 196. Mn(2+) is bound by residues histidine 196 and histidine 198. Substrate is bound at residue tyrosine 287.

This sequence belongs to the 4-hydroxy-2-oxovalerate aldolase family.

The catalysed reaction is (S)-4-hydroxy-2-oxopentanoate = acetaldehyde + pyruvate. The protein is 4-hydroxy-2-oxovalerate aldolase of Acidovorax sp. (strain JS42).